The primary structure comprises 693 residues: Translation factor GUF1 homolog, mitochondrial (693 aa).

The segment covering 51-63 (SSSSTEKPTTSGT) has biased composition (polar residues). The interval 51–78 (SSSSTEKPTTSGTINGGGGKQKAASQPK) is disordered. A tr-type G domain is found at 88–270 (QKIRNFSIIA…RIVQMVPPPP (183 aa)). GTP-binding positions include 97–104 (AHIDHGKS), 163–167 (DTPGH), and 217–220 (NKID).

It belongs to the TRAFAC class translation factor GTPase superfamily. Classic translation factor GTPase family. LepA subfamily.

It is found in the mitochondrion inner membrane. It carries out the reaction GTP + H2O = GDP + phosphate + H(+). Functionally, promotes mitochondrial protein synthesis. May act as a fidelity factor of the translation reaction, by catalyzing a one-codon backward translocation of tRNAs on improperly translocated ribosomes. Binds to mitochondrial ribosomes in a GTP-dependent manner. The polypeptide is Translation factor GUF1 homolog, mitochondrial (Phaeodactylum tricornutum (strain CCAP 1055/1)).